A 261-amino-acid polypeptide reads, in one-letter code: tRNA 5-carboxymethoxyuridine methyltransferase (261 aa).

S-adenosyl-L-methionine is bound by residues Arg26, 52-53, Asp73, 102-103, and His119; these read GG and AQ.

This sequence belongs to the class I-like SAM-binding methyltransferase superfamily. CmoM family.

The catalysed reaction is 5-carboxymethoxyuridine(34) in tRNA + S-adenosyl-L-methionine = 5-methoxycarbonylmethoxyuridine(34) in tRNA + S-adenosyl-L-homocysteine. Catalyzes the methylation of 5-carboxymethoxyuridine (cmo5U) to form 5-methoxycarbonylmethoxyuridine (mcmo5U) at position 34 in tRNAs. Four tRNAs (tRNA(Ala1), tRNA(Ser1), tRNA(Pro3) and tRNA(Thr4)) are fully modified with mcmo5U in stationary-phase E.coli. Also present at low frequency in tRNA(Leu3) and tRNA(Val1). This chain is tRNA 5-carboxymethoxyuridine methyltransferase, found in Escherichia coli (strain K12).